The chain runs to 304 residues: Acetylglutamate kinase (304 aa).

Substrate-binding positions include Gly-69–Gly-70, Arg-91, and Asn-202.

The protein belongs to the acetylglutamate kinase family. ArgB subfamily.

The protein localises to the cytoplasm. The enzyme catalyses N-acetyl-L-glutamate + ATP = N-acetyl-L-glutamyl 5-phosphate + ADP. Its pathway is amino-acid biosynthesis; L-arginine biosynthesis; N(2)-acetyl-L-ornithine from L-glutamate: step 2/4. Functionally, catalyzes the ATP-dependent phosphorylation of N-acetyl-L-glutamate. This chain is Acetylglutamate kinase, found in Caulobacter sp. (strain K31).